Reading from the N-terminus, the 928-residue chain is Eukaryotic translation initiation factor 3 subunit C (928 aa).

2 disordered regions span residues 1 to 37 and 157 to 286; these read MSRFFANGSDSESESSEEEVPTQFNNKAQNFQFSDDE and FREA…EDGE. The segment covering 11-20 has biased composition (acidic residues); sequence SESESSEEEV. Residues 22–33 show a composition bias toward polar residues; the sequence is TQFNNKAQNFQF. Residues Ser-34, Ser-165, Ser-177, and Ser-186 each carry the phosphoserine modification. Over residues 162–171 the composition is skewed to acidic residues; it reads DQESDVDEGE. Residues 172–184 show a composition bias toward basic and acidic residues; that stretch reads GDVHDSDADRAGD. The span at 215–240 shows a compositional bias: acidic residues; sequence DDDDSEDSIDWDPDTESETESSEDEN. Residues 245–264 are compositionally biased toward basic and acidic residues; that stretch reads MRERFLKRTTEKEDKDDDKR. A compositionally biased stretch (basic residues) spans 265–277; it reads KDKRKEQKHKVRK. The 177-residue stretch at 656–832 folds into the PCI domain; that stretch reads FHMHINLELL…ETVVMHRSEP (177 aa). Positions 864–928 are disordered; sequence FFQRGNMGNR…QQQVHTIDEE (65 aa). Basic residues predominate over residues 898-909; that stretch reads QRNRNQRGHHKQ. The span at 910 to 921 shows a compositional bias: low complexity; that stretch reads NQQQNQQQQQQQ.

Belongs to the eIF-3 subunit C family. As to quaternary structure, component of the eukaryotic translation initiation factor 3 (eIF-3) complex. The eIF-3 complex interacts with pix.

The protein localises to the cytoplasm. In terms of biological role, component of the eukaryotic translation initiation factor 3 (eIF-3) complex, which is involved in protein synthesis of a specialized repertoire of mRNAs and, together with other initiation factors, stimulates binding of mRNA and methionyl-tRNAi to the 40S ribosome. The eIF-3 complex specifically targets and initiates translation of a subset of mRNAs involved in cell proliferation. This is Eukaryotic translation initiation factor 3 subunit C from Drosophila grimshawi (Hawaiian fruit fly).